The following is a 361-amino-acid chain: Septin-2 (361 aa).

Tyr17 carries the phosphotyrosine modification. A Septin-type G domain is found at 34–306 (KGFEFTLMVV…ENFRSERLKR (273 aa)). The segment at 44–51 (GESGLGKS) is G1 motif. Residues 44-51 (GESGLGKS), Thr78, Gly104, and 183-191 (KADTLTLKE) each bind GTP. Residues 101-104 (DTPG) are G3 motif. Positions 182 to 185 (AKAD) are G4 motif. At Lys190 the chain carries N6-acetyllysine. Tyr211 is modified (phosphotyrosine). At Ser218 the chain carries Phosphoserine. Residues Gly241 and Arg256 each coordinate GTP. Residues 260–270 (WGVVEVENPEH) form an important for dimerization region.

The protein belongs to the TRAFAC class TrmE-Era-EngA-EngB-Septin-like GTPase superfamily. Septin GTPase family. Septins polymerize into heterooligomeric protein complexes that form filaments, and associate with cellular membranes, actin filaments and microtubules. GTPase activity is required for filament formation. Filaments are assembled from asymmetrical heterotrimers, composed of SEPTIN2, SEPTIN6 and SEPTIN7 that associate head-to-head to form a hexameric unit. Interaction between SEPTIN2 and SEPTIN7 seems indirect. Interacts with SEPTIN5. Interaction with SEPTIN4 not detected. Interacts with SEPTIN9. Component of a septin core octameric complex consisting of SEPTIN12, SEPTIN7, SEPTIN6 and SEPTIN2 or SEPTIN4 in the order 12-7-6-2-2-6-7-12 or 12-7-6-4-4-6-7-12 and located in the sperm annulus. Interacts with MAP4. Interacts with DZIP1L.

The protein resides in the cytoplasm. It is found in the cytoskeleton. Its subcellular location is the spindle. The protein localises to the chromosome. It localises to the centromere. The protein resides in the kinetochore. It is found in the cleavage furrow. Its subcellular location is the midbody. The protein localises to the cell cortex. It localises to the cell projection. The protein resides in the cilium membrane. It is found in the cilium. Its subcellular location is the flagellum. In terms of biological role, filament-forming cytoskeletal GTPase. Forms a filamentous structure with SEPTIN12, SEPTIN6, SEPTIN2 and probably SEPTIN4 at the sperm annulus which is required for the structural integrity and motility of the sperm tail during postmeiotic differentiation. Required for normal organization of the actin cytoskeleton. Plays a role in the biogenesis of polarized columnar-shaped epithelium by maintaining polyglutamylated microtubules, thus facilitating efficient vesicle transport, and by impeding MAP4 binding to tubulin. Required for the progression through mitosis. Forms a scaffold at the midplane of the mitotic splindle required to maintain CENPE localization at kinetochores and consequently chromosome congression. During anaphase, may be required for chromosome segregation and spindle elongation. Plays a role in ciliogenesis and collective cell movements. In cilia, required for the integrity of the diffusion barrier at the base of the primary cilium that prevents diffusion of transmembrane proteins between the cilia and plasma membranes: probably acts by regulating the assembly of the tectonic-like complex (also named B9 complex) by localizing TMEM231 protein. The protein is Septin-2 of Bos taurus (Bovine).